A 287-amino-acid chain; its full sequence is Very long chain fatty acid elongase 4 (287 aa).

The next 3 helical transmembrane spans lie at 33 to 53 (ILVYCCVLYILLVFMVPEHIM), 64 to 84 (PFVFWNIGLCLFSFCGAYSCV), and 115 to 135 (FWVFYFILSKIPEMIDTVFLV). The HxxHH motif motif lies at 145–149 (HWYHH). His148 functions as the Nucleophile in the catalytic mechanism. A run of 4 helical transmembrane segments spans residues 150–170 (LTVAIFCWHAGHALIPSGLWF), 172–192 (TMNYCVHSIMYFYYFMCACGM), 199–219 (IAPFITMMQLLQMVAGTLIVL), and 241–261 (LGLVMYGSYFFLFAVLFGKLY).

It belongs to the ELO family.

It localises to the membrane. The catalysed reaction is a very-long-chain acyl-CoA + malonyl-CoA + H(+) = a very-long-chain 3-oxoacyl-CoA + CO2 + CoA. Functionally, involved in the synthesis of fatty acids. Elongates C16:0 and C18:0 fatty acids to C26:0, with C24:0 being the main product. The chain is Very long chain fatty acid elongase 4 from Trypanosoma cruzi (strain CL Brener).